The primary structure comprises 342 residues: UDP-N-acetylglucosamine--N-acetylmuramyl-(pentapeptide) pyrophosphoryl-undecaprenol N-acetylglucosamine transferase (342 aa).

UDP-N-acetyl-alpha-D-glucosamine is bound by residues 10–12, Asn-124, Ser-177, and Gln-275; that span reads TGG.

It belongs to the glycosyltransferase 28 family. MurG subfamily.

It localises to the cell inner membrane. The catalysed reaction is di-trans,octa-cis-undecaprenyl diphospho-N-acetyl-alpha-D-muramoyl-L-alanyl-D-glutamyl-meso-2,6-diaminopimeloyl-D-alanyl-D-alanine + UDP-N-acetyl-alpha-D-glucosamine = di-trans,octa-cis-undecaprenyl diphospho-[N-acetyl-alpha-D-glucosaminyl-(1-&gt;4)]-N-acetyl-alpha-D-muramoyl-L-alanyl-D-glutamyl-meso-2,6-diaminopimeloyl-D-alanyl-D-alanine + UDP + H(+). It functions in the pathway cell wall biogenesis; peptidoglycan biosynthesis. Cell wall formation. Catalyzes the transfer of a GlcNAc subunit on undecaprenyl-pyrophosphoryl-MurNAc-pentapeptide (lipid intermediate I) to form undecaprenyl-pyrophosphoryl-MurNAc-(pentapeptide)GlcNAc (lipid intermediate II). The protein is UDP-N-acetylglucosamine--N-acetylmuramyl-(pentapeptide) pyrophosphoryl-undecaprenol N-acetylglucosamine transferase of Campylobacter jejuni (strain RM1221).